A 65-amino-acid polypeptide reads, in one-letter code: Photosystem II reaction center protein Z (65 aa).

2 helical membrane passes run alanine 8–alanine 28 and tyrosine 41–valine 61.

The protein belongs to the PsbZ family. As to quaternary structure, PSII is composed of 1 copy each of membrane proteins PsbA, PsbB, PsbC, PsbD, PsbE, PsbF, PsbH, PsbI, PsbJ, PsbK, PsbL, PsbM, PsbT, PsbX, PsbY, PsbZ, Psb30/Ycf12, at least 3 peripheral proteins of the oxygen-evolving complex and a large number of cofactors. It forms dimeric complexes.

Its subcellular location is the plastid. The protein localises to the cyanelle thylakoid membrane. May control the interaction of photosystem II (PSII) cores with the light-harvesting antenna, regulates electron flow through the 2 photosystem reaction centers. PSII is a light-driven water plastoquinone oxidoreductase, using light energy to abstract electrons from H(2)O, generating a proton gradient subsequently used for ATP formation. This is Photosystem II reaction center protein Z from Cyanophora paradoxa.